A 689-amino-acid polypeptide reads, in one-letter code: Elongation factor G (689 aa).

One can recognise a tr-type G domain in the interval 8 to 282 (ENTRNLGIMA…AVVDYLPSPL (275 aa)). Residues 17–24 (AHIDAGKT), 81–85 (DTPGH), and 135–138 (NKMD) contribute to the GTP site.

The protein belongs to the TRAFAC class translation factor GTPase superfamily. Classic translation factor GTPase family. EF-G/EF-2 subfamily.

Its subcellular location is the cytoplasm. Its function is as follows. Catalyzes the GTP-dependent ribosomal translocation step during translation elongation. During this step, the ribosome changes from the pre-translocational (PRE) to the post-translocational (POST) state as the newly formed A-site-bound peptidyl-tRNA and P-site-bound deacylated tRNA move to the P and E sites, respectively. Catalyzes the coordinated movement of the two tRNA molecules, the mRNA and conformational changes in the ribosome. The protein is Elongation factor G of Mesoplasma florum (strain ATCC 33453 / NBRC 100688 / NCTC 11704 / L1) (Acholeplasma florum).